Consider the following 140-residue polypeptide: Large ribosomal subunit protein bL17 (140 aa).

The protein belongs to the bacterial ribosomal protein bL17 family. As to quaternary structure, part of the 50S ribosomal subunit. Contacts protein L32.

The chain is Large ribosomal subunit protein bL17 from Rhizobium etli (strain CIAT 652).